An 843-amino-acid chain; its full sequence is MADLNSVIRIKPFHFIHVLDNNTNVTRVEVGPQTFTRQDHEKLVSGPEPMIMIPQRNYCTISNPVVRNENGSLVLDEYGQVKLRHGDEEIRFSQEPFPLYPGEKISGKVTALQVVAPLKALRLRALRDFTEAKVTHVAGDEWLFEGPATYLPRIDVRIEEEIKATIIGPNQALKLRANKACSDRSGVARKAGEEWLVRQHGAYLPGVDEKVVEIVNAYVLTDKKALHLKATKTFLDETRKTQRKAGEEWLVVSTDAETHIPDVYEQVVGEVHITTLSNRQYCVVLDPIGANGKPQLGHKQLRKGELAFFLNPGESLEGNKIHNIYVLTEQEALLLRAKETFSIDGESHLAGDRWMIYGPCDYVPPVQVEVVEKRESIPLDENEGIYVRDIKTGKVASIKGQSYMLKANEELWEKVLPRTVEEVLAKESLNPEFTDNRDSTRVVTYRAPHNSAVQIYDYKEKKSRVVFGPDLVMLGPDEHFTVLSLSGDKPKRPHQIKAIALFLGPDFMTDVVIVETSDHARLSLKLSYNWEFKVDRSKIEDAQKIFQVPDFVGDSCKAIASRVRGAVAAVSFDDFHKRSAEVIRQSVFGLDESGEVRKNFSFNSNNLVITNIDIQSVEPVDQRTRDSLQKSVQLAIEITTKSQEAAARHEAERLEQGARGRLERQKIHDEAQAELARKDLLQLQAQSAAVESTGQATAEAQATAEAANIAAEANVKQAELKAQATKIRSESEISLLKAKRENELSYQKSIDELELTKQSDLAEIEASKFKAIVESIGRDTLKSIACAGNEMQAKLLQGLGLKSFMITDGKSPLNLFDTANGIIGNNNQMVNMSNAAKQSGRRN.

Alanine 2 is subject to N-acetylalanine. 9 MVP repeats span residues 2–56, 57–111, 112–163, 164–216, 217–272, 273–324, 325–376, 377–442, and 443–505; these read ADLN…IPQR, NYCT…KVTA, LQVV…EEIK, ATII…EIVN, AYVL…GEVH, ITTL…IHNI, YVLT…KRES, IPLD…STRV, and VTYR…FLGP. The interval 643–663 is disordered; it reads QEAAARHEAERLEQGARGRLE. Residues 646 to 663 are compositionally biased toward basic and acidic residues; the sequence is AARHEAERLEQGARGRLE.

The vault ribonucleoprotein particle is a huge (400 A x 670 A) cage structure of 12.9 MDa. It consists of a dimer of half-vaults, with each half-vault comprising 39 identical major vault protein (MVP) chains. Dictyostelium is one of the few organisms in which the major component is actually two proteins (alpha and beta).

It localises to the cytoplasm. Its subcellular location is the nucleus. In terms of biological role, unknown, though MVP-alpha is required for normal vault structure. The chain is Major vault protein alpha (mvpA) from Dictyostelium discoideum (Social amoeba).